Here is a 465-residue protein sequence, read N- to C-terminus: Cerebellar degeneration-related protein 2-like (465 aa).

Coiled-coil stretches lie at residues 38-143 (LLER…EQLR) and 188-265 (LEQE…TYLL). A disordered region spans residues 282-314 (APEADDPQPGRGDDLGAQDGVSSPAASPGHVVR). Residues Ser-308, Ser-318, and Ser-344 each carry the phosphoserine modification. Residues 350 to 377 (MSILREVDEQYHALLEKYEELLSKCRQH) adopt a coiled-coil conformation. The interval 382–417 (RHAGVQTSRPISRDSSWRDLRGGEEGQGEVKAGEKS) is disordered. Over residues 392-405 (ISRDSSWRDLRGGE) the composition is skewed to basic and acidic residues.

This sequence belongs to the CDR2 family.

In Homo sapiens (Human), this protein is Cerebellar degeneration-related protein 2-like (CDR2L).